We begin with the raw amino-acid sequence, 424 residues long: Spindle pole component BBP1 (424 aa).

Ser29 bears the Phosphoserine mark. Over residues 34–48 the composition is skewed to basic and acidic residues; that stretch reads YKDQEERRDRSRYAQ. A disordered region spans residues 34–76; the sequence is YKDQEERRDRSRYAQDDTNFSMKFGNDSNRRSTNLSRSNSWSG. Low complexity predominate over residues 64–75; the sequence is RSTNLSRSNSWS. 2 positions are modified to phosphoserine: Ser73 and Ser115. Residues 229–355 are a coiled coil; sequence QMDLNSRDLE…KDMQRDNYES (127 aa).

It belongs to the BBP1 family. Homodimer. Interacts with KAR1, MPS2 and SPC29.

It is found in the cytoplasm. It localises to the cytoskeleton. Its subcellular location is the microtubule organizing center. The protein resides in the spindle pole body. Component of the spindle pole body (SPB) required for insertion of the nascent SPB into the nuclear envelope and for the proper execution of spindle pole body (SPB) duplication. Connects the central plaque of the SPB with the half-bridge. Required for proper localization of CDC5 at the SPB and for proper M-phase progression. The polypeptide is Spindle pole component BBP1 (BBP1) (Saccharomyces cerevisiae (strain FostersO) (Baker's yeast)).